Reading from the N-terminus, the 161-residue chain is MTVISQVILQADDELRYPSSGELKSISDFLQTGVQRTRIVATLAENEKKIVQEATKQLWQKRPDFIAPGGNAYGERQRALCIRDFGWYLRLITYGVLAGDIEPIEKIGIIGVREMYNSLGVPVPGMVEAINSLKKASLDLLSSEDAAAAAPYFDYIIQAMS.

An N4-methylasparagine modification is found at N71. C81 serves as a coordination point for (2R,3E)-phycocyanobilin.

Belongs to the phycobiliprotein family. In terms of assembly, heterohexamer of two alpha chains, one alpha-B chain and three beta chains. In terms of processing, contains one covalently linked phycocyanobilin chromophore. The chromophore is added by phycocyanobilin lyase CpcS 1.

Its subcellular location is the cellular thylakoid membrane. Its function is as follows. Light-harvesting photosynthetic bile pigment-protein from the phycobiliprotein complex. Allophycocyanin has a maximum absorption at approximately 654 nanometers. The chain is Allophycocyanin subunit alpha-B (apcD) from Nostoc sp. (strain PCC 7120 / SAG 25.82 / UTEX 2576).